The sequence spans 120 residues: Large ribosomal subunit protein bL19 (120 aa).

Belongs to the bacterial ribosomal protein bL19 family.

Its function is as follows. This protein is located at the 30S-50S ribosomal subunit interface and may play a role in the structure and function of the aminoacyl-tRNA binding site. The polypeptide is Large ribosomal subunit protein bL19 (Synechococcus sp. (strain ATCC 27144 / PCC 6301 / SAUG 1402/1) (Anacystis nidulans)).